Reading from the N-terminus, the 101-residue chain is Long chronological lifespan protein 1 (101 aa).

The first 17 residues, 1 to 17, serve as a signal peptide directing secretion; it reads MKNAALCEALPLLATCS. S81 is lipidated: GPI-anchor amidated serine. Positions 82 to 101 are cleaved as a propeptide — removed in mature form; it reads FAKPSFSFFFFLLTSLLSPF.

It localises to the cell membrane. The protein is Long chronological lifespan protein 1 (LCL1) of Saccharomyces cerevisiae (strain ATCC 204508 / S288c) (Baker's yeast).